We begin with the raw amino-acid sequence, 452 residues long: Bis(5'-adenosyl)-triphosphatase enpp4 (452 aa).

Positions 1–19 (MFGRVFIVAVLYCITICKG) are cleaved as a signal peptide. The Extracellular segment spans residues 20 to 407 (EDPTNSSTPK…NQWCIQVSEA (388 aa)). N-linked (GlcNAc...) asparagine glycosylation occurs at asparagine 24. Zn(2+) is bound by residues aspartate 36 and threonine 72. The active-site AMP-threonine intermediate is threonine 72. Asparagine 93 is a binding site for substrate. N-linked (GlcNAc...) asparagine glycosylation occurs at asparagine 107. Tyrosine 154 is a substrate binding site. N-linked (GlcNAc...) asparagine glycosylation is found at asparagine 155 and asparagine 175. Zn(2+)-binding residues include aspartate 189 and histidine 193. Aspartate 189 is a binding site for substrate. Asparagine 202 is a glycosylation site (N-linked (GlcNAc...) asparagine). Residues aspartate 237 and histidine 238 each coordinate Zn(2+). Residues cysteine 254 and cysteine 287 are joined by a disulfide bond. N-linked (GlcNAc...) asparagine glycosylation is found at asparagine 259 and asparagine 327. Position 336 (histidine 336) interacts with Zn(2+). The N-linked (GlcNAc...) asparagine glycan is linked to asparagine 386. A disulfide bridge links cysteine 394 with cysteine 401. A helical membrane pass occupies residues 408–428 (IGIVIGAIMVLTTLTCIIIML). Topologically, residues 429-452 (KKKMPSARPFSRLQFQDDDDPLIG) are cytoplasmic.

This sequence belongs to the nucleotide pyrophosphatase/phosphodiesterase family. Zn(2+) is required as a cofactor.

Its subcellular location is the cell membrane. The catalysed reaction is P(1),P(3)-bis(5'-adenosyl) triphosphate + H2O = AMP + ADP + 2 H(+). In terms of biological role, hydrolyzes extracellular Ap3A into AMP and ADP, and Ap4A into AMP and ATP. Ap3A and Ap4A are diadenosine polyphosphates thought to induce proliferation of vascular smooth muscle cells. Acts as a procoagulant, mediating platelet aggregation at the site of nascent thrombus via release of ADP from Ap3A and activation of ADP receptors. This is Bis(5'-adenosyl)-triphosphatase enpp4 (enpp4) from Xenopus laevis (African clawed frog).